The chain runs to 473 residues: Ribulose bisphosphate carboxylase large chain 2 (473 aa).

Substrate is bound by residues N116 and T166. K168 serves as the catalytic Proton acceptor. K170 contributes to the substrate binding site. The Mg(2+) site is built by K194, D196, and E197. K194 carries the post-translational modification N6-carboxylysine. H287 (proton acceptor) is an active-site residue. Substrate contacts are provided by R288, H320, and S372.

This sequence belongs to the RuBisCO large chain family. Type I subfamily. As to quaternary structure, heterohexadecamer of 8 large chains and 8 small chains. Requires Mg(2+) as cofactor.

The catalysed reaction is 2 (2R)-3-phosphoglycerate + 2 H(+) = D-ribulose 1,5-bisphosphate + CO2 + H2O. The enzyme catalyses D-ribulose 1,5-bisphosphate + O2 = 2-phosphoglycolate + (2R)-3-phosphoglycerate + 2 H(+). In terms of biological role, ruBisCO catalyzes two reactions: the carboxylation of D-ribulose 1,5-bisphosphate, the primary event in carbon dioxide fixation, as well as the oxidative fragmentation of the pentose substrate. Both reactions occur simultaneously and in competition at the same active site. The sequence is that of Ribulose bisphosphate carboxylase large chain 2 from Acidithiobacillus ferrooxidans (Thiobacillus ferrooxidans).